The primary structure comprises 512 residues: MPAASDRETDVVLIGAGIMSATLGAFLKELEPSLTIQMLETLDDCAQESSDSWNNAGTGHAANCEMNYTPQRPDGSIDISKALQVNVEFDLSRQFWSYLIGRGAIADPRSFIHPVPHMSFVHGTENVEFLRKRFKAMSAHHCYEGMEHTEDPRKIAEWAPLVMDGRSGDEPVAATRIITGTDVDYGALTHLLVGHLVSQPGCAVHYNSCVTGLVREQGGRWRIEVRDTASGETRSVRAKFVFIGAGGGALPLLEKSGLPEARGYGGFPVSGIWLRCDDPEINKRHHAKVYGKAAVGSPPMSVPHLDTRVIGGKHSLLFGPYAGFSSKFLKHGSLLDLFESIRPANVKPLLSVARDNFDLTEYLVGQVLQSESHRLAALDEYFPKADPKDWRLQVAGQRVQIIKPDVKRGGLLEFGTELVGADDHSLVALLGASPGASTAAFIAISVLEKCFAGELTASAWLPKLKQIVPSYGVSLIDDADFCRQIRATTAEVLKVDNIPQPAARAPAAAKRA.

It belongs to the MQO family. The cofactor is FAD.

It carries out the reaction (S)-malate + a quinone = a quinol + oxaloacetate. The protein operates within carbohydrate metabolism; tricarboxylic acid cycle; oxaloacetate from (S)-malate (quinone route): step 1/1. This is Probable malate:quinone oxidoreductase from Bradyrhizobium diazoefficiens (strain JCM 10833 / BCRC 13528 / IAM 13628 / NBRC 14792 / USDA 110).